A 360-amino-acid chain; its full sequence is DNA replication and repair protein RecF (360 aa).

Gly33–Thr40 contributes to the ATP binding site.

This sequence belongs to the RecF family.

It is found in the cytoplasm. The RecF protein is involved in DNA metabolism; it is required for DNA replication and normal SOS inducibility. RecF binds preferentially to single-stranded, linear DNA. It also seems to bind ATP. This chain is DNA replication and repair protein RecF, found in Rickettsia typhi (strain ATCC VR-144 / Wilmington).